The following is a 478-amino-acid chain: tRNA (adenine(58)-N(1))-methyltransferase non-catalytic subunit TRM6 (478 aa).

A disordered region spans residues 456–478; that stretch reads SENATAADSSEKLAEHGAKKQKI. Residues 464–478 show a composition bias toward basic and acidic residues; sequence SSEKLAEHGAKKQKI.

Belongs to the TRM6/GCD10 family. Heterotetramer; composed of two copies of TRM6/GCD10 and two copies of TRM61/GCD14.

The protein localises to the nucleus. Its function is as follows. Substrate-binding subunit of tRNA (adenine-N(1)-)-methyltransferase, which catalyzes the formation of N(1)-methyladenine at position 58 (m1A58) in initiator methionyl-tRNA. Also required for repression of GCN4 mRNA translation by the upstream open reading frames (uORFs) under conditions of amino acid sufficiency. The polypeptide is tRNA (adenine(58)-N(1))-methyltransferase non-catalytic subunit TRM6 (GCD10) (Saccharomyces cerevisiae (strain ATCC 204508 / S288c) (Baker's yeast)).